We begin with the raw amino-acid sequence, 90 residues long: PIK3R3 upstream open reading frame protein (90 aa).

Positions 1–63 are disordered; that stretch reads MGPSQLVRAP…PASEATNISD (63 aa). A compositionally biased stretch (basic residues) spans 27 to 46; it reads PRRRCPSMFKCSRRTYRQKP. The span at 50–63 shows a compositional bias: polar residues; it reads TATNPASEATNISD.

The chain is PIK3R3 upstream open reading frame protein from Mus musculus (Mouse).